A 353-amino-acid chain; its full sequence is D-alanine--D-alanine ligase A (353 aa).

Residues 141-346 enclose the ATP-grasp domain; that stretch reads KRLVNEAGLS…YPEIINRLVA (206 aa). 169 to 224 provides a ligand contact to ATP; sequence EQALGLPIFIKPARQGSSVGVHKVVTEADYQAAMSDGFIYDDKLLAEEFIQAREVE. 3 residues coordinate Mg(2+): Asp300, Glu313, and Asn315.

This sequence belongs to the D-alanine--D-alanine ligase family. It depends on Mg(2+) as a cofactor. Mn(2+) serves as cofactor.

Its subcellular location is the cytoplasm. It catalyses the reaction 2 D-alanine + ATP = D-alanyl-D-alanine + ADP + phosphate + H(+). The protein operates within cell wall biogenesis; peptidoglycan biosynthesis. Its function is as follows. Cell wall formation. The sequence is that of D-alanine--D-alanine ligase A from Brucella melitensis biotype 1 (strain ATCC 23456 / CCUG 17765 / NCTC 10094 / 16M).